The primary structure comprises 211 residues: Thiamine-phosphate synthase (211 aa).

4-amino-2-methyl-5-(diphosphooxymethyl)pyrimidine contacts are provided by residues glutamine 38 to lysine 42 and asparagine 70. Aspartate 71 and aspartate 90 together coordinate Mg(2+). Serine 109 lines the 4-amino-2-methyl-5-(diphosphooxymethyl)pyrimidine pocket. Threonine 135 to threonine 137 is a 2-[(2R,5Z)-2-carboxy-4-methylthiazol-5(2H)-ylidene]ethyl phosphate binding site. Lysine 138 provides a ligand contact to 4-amino-2-methyl-5-(diphosphooxymethyl)pyrimidine. 2-[(2R,5Z)-2-carboxy-4-methylthiazol-5(2H)-ylidene]ethyl phosphate contacts are provided by residues glycine 165 and isoleucine 185–serine 186.

The protein belongs to the thiamine-phosphate synthase family. Mg(2+) serves as cofactor.

The catalysed reaction is 2-[(2R,5Z)-2-carboxy-4-methylthiazol-5(2H)-ylidene]ethyl phosphate + 4-amino-2-methyl-5-(diphosphooxymethyl)pyrimidine + 2 H(+) = thiamine phosphate + CO2 + diphosphate. It carries out the reaction 2-(2-carboxy-4-methylthiazol-5-yl)ethyl phosphate + 4-amino-2-methyl-5-(diphosphooxymethyl)pyrimidine + 2 H(+) = thiamine phosphate + CO2 + diphosphate. It catalyses the reaction 4-methyl-5-(2-phosphooxyethyl)-thiazole + 4-amino-2-methyl-5-(diphosphooxymethyl)pyrimidine + H(+) = thiamine phosphate + diphosphate. It participates in cofactor biosynthesis; thiamine diphosphate biosynthesis; thiamine phosphate from 4-amino-2-methyl-5-diphosphomethylpyrimidine and 4-methyl-5-(2-phosphoethyl)-thiazole: step 1/1. Condenses 4-methyl-5-(beta-hydroxyethyl)thiazole monophosphate (THZ-P) and 2-methyl-4-amino-5-hydroxymethyl pyrimidine pyrophosphate (HMP-PP) to form thiamine monophosphate (TMP). The sequence is that of Thiamine-phosphate synthase from Clostridium acetobutylicum (strain ATCC 824 / DSM 792 / JCM 1419 / IAM 19013 / LMG 5710 / NBRC 13948 / NRRL B-527 / VKM B-1787 / 2291 / W).